The chain runs to 316 residues: MSDGNTAAAWVPTGSVTVRVPGKVNLYLAVGDRREDGYHELTTIFQAVSLLDEVTVRNADVLSLDIVGEGADKLPTDERNLAWQAAELMAEHVGRAPDVSIMIDKSIPVAGGMAGGSADAAAVLVAMNSLWELNVPRRDLRMLAAQLGSDVPFALHGGTALGTGRGEELATVLSRNTFHWVLAFADGELLTRKVFAELDRLRRAGDPPRLPGPGPVLAALAAGDADQLAPLLGNEMQAAAVSLNPGLRRTLRAGVQAGALAGIVSGSGPTCAFLCPSAAAAVDVGTEVSGVGVCRTVRVASGPVAGARVVPAPTEV.

The active site involves K23. Residue 108–118 (PVAGGMAGGSA) participates in ATP binding. D150 is an active-site residue.

Belongs to the GHMP kinase family. IspE subfamily.

The enzyme catalyses 4-CDP-2-C-methyl-D-erythritol + ATP = 4-CDP-2-C-methyl-D-erythritol 2-phosphate + ADP + H(+). The protein operates within isoprenoid biosynthesis; isopentenyl diphosphate biosynthesis via DXP pathway; isopentenyl diphosphate from 1-deoxy-D-xylulose 5-phosphate: step 3/6. Its function is as follows. Catalyzes the phosphorylation of the position 2 hydroxy group of 4-diphosphocytidyl-2C-methyl-D-erythritol. The sequence is that of 4-diphosphocytidyl-2-C-methyl-D-erythritol kinase from Mycobacterium avium (strain 104).